The following is a 228-amino-acid chain: PKHD-type hydroxylase XCV3086 (228 aa).

In terms of domain architecture, Fe2OG dioxygenase spans 78–180; sequence RIYPPLFNRY…RVACFFWTQS (103 aa). The Fe cation site is built by His-96, Asp-98, and His-161. 2-oxoglutarate is bound at residue Arg-171.

It depends on Fe(2+) as a cofactor. Requires L-ascorbate as cofactor.

The protein is PKHD-type hydroxylase XCV3086 of Xanthomonas euvesicatoria pv. vesicatoria (strain 85-10) (Xanthomonas campestris pv. vesicatoria).